Here is a 301-residue protein sequence, read N- to C-terminus: Lipoyl synthase (301 aa).

Positions 50, 55, 61, 76, 80, 83, and 289 each coordinate [4Fe-4S] cluster. Residues 62–278 enclose the Radical SAM core domain; it reads WNHRTATFLL…RRYALERGFR (217 aa).

The protein belongs to the radical SAM superfamily. Lipoyl synthase family. [4Fe-4S] cluster is required as a cofactor.

It localises to the cytoplasm. It catalyses the reaction [[Fe-S] cluster scaffold protein carrying a second [4Fe-4S](2+) cluster] + N(6)-octanoyl-L-lysyl-[protein] + 2 oxidized [2Fe-2S]-[ferredoxin] + 2 S-adenosyl-L-methionine + 4 H(+) = [[Fe-S] cluster scaffold protein] + N(6)-[(R)-dihydrolipoyl]-L-lysyl-[protein] + 4 Fe(3+) + 2 hydrogen sulfide + 2 5'-deoxyadenosine + 2 L-methionine + 2 reduced [2Fe-2S]-[ferredoxin]. Its pathway is protein modification; protein lipoylation via endogenous pathway; protein N(6)-(lipoyl)lysine from octanoyl-[acyl-carrier-protein]: step 2/2. In terms of biological role, catalyzes the radical-mediated insertion of two sulfur atoms into the C-6 and C-8 positions of the octanoyl moiety bound to the lipoyl domains of lipoate-dependent enzymes, thereby converting the octanoylated domains into lipoylated derivatives. This chain is Lipoyl synthase, found in Roseiflexus sp. (strain RS-1).